The following is a 179-amino-acid chain: Protein GrpE (179 aa).

A disordered region spans residues 1–45; sequence MSEEKLTQDPTAEEEQTETADQQESADVNWEQEAAHWKAQAEEHQ. Basic and acidic residues predominate over residues 33 to 45; the sequence is EAAHWKAQAEEHQ.

This sequence belongs to the GrpE family. In terms of assembly, homodimer.

The protein resides in the cytoplasm. Its function is as follows. Participates actively in the response to hyperosmotic and heat shock by preventing the aggregation of stress-denatured proteins, in association with DnaK and GrpE. It is the nucleotide exchange factor for DnaK and may function as a thermosensor. Unfolded proteins bind initially to DnaJ; upon interaction with the DnaJ-bound protein, DnaK hydrolyzes its bound ATP, resulting in the formation of a stable complex. GrpE releases ADP from DnaK; ATP binding to DnaK triggers the release of the substrate protein, thus completing the reaction cycle. Several rounds of ATP-dependent interactions between DnaJ, DnaK and GrpE are required for fully efficient folding. This is Protein GrpE from Brevibacillus choshinensis.